Reading from the N-terminus, the 101-residue chain is Small ribosomal subunit protein uS14 (101 aa).

This sequence belongs to the universal ribosomal protein uS14 family. Part of the 30S ribosomal subunit. Contacts proteins S3 and S10.

In terms of biological role, binds 16S rRNA, required for the assembly of 30S particles and may also be responsible for determining the conformation of the 16S rRNA at the A site. The polypeptide is Small ribosomal subunit protein uS14 (Arthrobacter sp. (strain FB24)).